The chain runs to 169 residues: Ribosome maturation factor RimP (169 aa).

Belongs to the RimP family.

It is found in the cytoplasm. Functionally, required for maturation of 30S ribosomal subunits. In Streptomyces avermitilis (strain ATCC 31267 / DSM 46492 / JCM 5070 / NBRC 14893 / NCIMB 12804 / NRRL 8165 / MA-4680), this protein is Ribosome maturation factor RimP.